Here is a 201-residue protein sequence, read N- to C-terminus: Potassium-transporting ATPase KdpC subunit (201 aa).

Residues 10–30 traverse the membrane as a helical segment; it reads VVLVVLTVICGLAYPLAMTGI. The disordered stretch occupies residues 67 to 105; that stretch reads HGRPSATSAADPADPTKTVSSPYNAANSSGSNLGPTSKA. Over residues 70 to 82 the composition is skewed to low complexity; sequence PSATSAADPADPT. A compositionally biased stretch (polar residues) spans 83 to 105; it reads KTVSSPYNAANSSGSNLGPTSKA.

The protein belongs to the KdpC family. The system is composed of three essential subunits: KdpA, KdpB and KdpC.

The protein resides in the cell inner membrane. Part of the high-affinity ATP-driven potassium transport (or Kdp) system, which catalyzes the hydrolysis of ATP coupled with the electrogenic transport of potassium into the cytoplasm. This subunit acts as a catalytic chaperone that increases the ATP-binding affinity of the ATP-hydrolyzing subunit KdpB by the formation of a transient KdpB/KdpC/ATP ternary complex. This Rhodopseudomonas palustris (strain BisB5) protein is Potassium-transporting ATPase KdpC subunit.